The chain runs to 309 residues: Homoserine kinase (309 aa).

91–101 (PIGSGLGSSAC) contacts ATP.

Belongs to the GHMP kinase family. Homoserine kinase subfamily.

Its subcellular location is the cytoplasm. The catalysed reaction is L-homoserine + ATP = O-phospho-L-homoserine + ADP + H(+). It participates in amino-acid biosynthesis; L-threonine biosynthesis; L-threonine from L-aspartate: step 4/5. Catalyzes the ATP-dependent phosphorylation of L-homoserine to L-homoserine phosphate. In Pectobacterium atrosepticum (strain SCRI 1043 / ATCC BAA-672) (Erwinia carotovora subsp. atroseptica), this protein is Homoserine kinase.